The following is a 231-amino-acid chain: uncharacterized protein (231 aa).

5 consecutive transmembrane segments (helical) span residues 36 to 56, 58 to 78, 83 to 103, 143 to 163, and 170 to 190; these read SLLA…SFFI, SQVT…ALQW, APLN…TLTP, FTVM…ASLL, and SIVN…YILY.

This sequence belongs to the BI1 family.

It is found in the cell membrane. This is an uncharacterized protein from Campylobacter jejuni subsp. jejuni serotype O:2 (strain ATCC 700819 / NCTC 11168).